Consider the following 1272-residue polypeptide: Vitamin B12-dependent ribonucleotide reductase (1272 aa).

Substrate is bound by residues Ser-153, 198–199, Gly-230, 474–478, and 675–679; these read AC, NPCSE, and PTGTI. The cysteines at positions 199 and 487 are disulfide-linked. The Proton acceptor role is filled by Asn-474. The Cysteine radical intermediate role is filled by Cys-476. The Proton acceptor role is filled by Glu-478. The interval 1120–1147 is disordered; sequence TLVSSNEGDRAASEPKGSATAAPARGSA.

This sequence belongs to the ribonucleoside diphosphate reductase class-2 family. Adenosylcob(III)alamin serves as cofactor.

It catalyses the reaction a 2'-deoxyribonucleoside 5'-diphosphate + [thioredoxin]-disulfide + H2O = a ribonucleoside 5'-diphosphate + [thioredoxin]-dithiol. In terms of biological role, catalyzes the reduction of ribonucleotides to deoxyribonucleotides. May function to provide a pool of deoxyribonucleotide precursors for DNA repair during oxygen limitation and/or for immediate growth after restoration of oxygen. This Agrobacterium fabrum (strain C58 / ATCC 33970) (Agrobacterium tumefaciens (strain C58)) protein is Vitamin B12-dependent ribonucleotide reductase (nrdJ).